Here is a 261-residue protein sequence, read N- to C-terminus: 4-hydroxy-tetrahydrodipicolinate reductase (261 aa).

9 to 14 (GCLGRM) is a binding site for NAD(+). R36 contacts NADP(+). NAD(+) contacts are provided by residues 97–99 (GTT) and 118–121 (SANM). H151 acts as the Proton donor/acceptor in catalysis. H152 provides a ligand contact to (S)-2,3,4,5-tetrahydrodipicolinate. K155 (proton donor) is an active-site residue. A (S)-2,3,4,5-tetrahydrodipicolinate-binding site is contributed by 161-162 (GT).

The protein belongs to the DapB family.

The protein resides in the cytoplasm. It carries out the reaction (S)-2,3,4,5-tetrahydrodipicolinate + NAD(+) + H2O = (2S,4S)-4-hydroxy-2,3,4,5-tetrahydrodipicolinate + NADH + H(+). The catalysed reaction is (S)-2,3,4,5-tetrahydrodipicolinate + NADP(+) + H2O = (2S,4S)-4-hydroxy-2,3,4,5-tetrahydrodipicolinate + NADPH + H(+). It participates in amino-acid biosynthesis; L-lysine biosynthesis via DAP pathway; (S)-tetrahydrodipicolinate from L-aspartate: step 4/4. Catalyzes the conversion of 4-hydroxy-tetrahydrodipicolinate (HTPA) to tetrahydrodipicolinate. This is 4-hydroxy-tetrahydrodipicolinate reductase from Wolbachia sp. subsp. Drosophila simulans (strain wRi).